We begin with the raw amino-acid sequence, 542 residues long: Chaperonin GroEL (542 aa).

ATP contacts are provided by residues 29 to 32 (TLGP), 86 to 90 (DGTTT), Gly413, 476 to 478 (NAA), and Asp492. The segment at 522–542 (PDENGPAAVPDMGMGGMGGMM) is disordered.

Belongs to the chaperonin (HSP60) family. Forms a cylinder of 14 subunits composed of two heptameric rings stacked back-to-back. Interacts with the co-chaperonin GroES.

The protein resides in the cytoplasm. It carries out the reaction ATP + H2O + a folded polypeptide = ADP + phosphate + an unfolded polypeptide.. Its function is as follows. Together with its co-chaperonin GroES, plays an essential role in assisting protein folding. The GroEL-GroES system forms a nano-cage that allows encapsulation of the non-native substrate proteins and provides a physical environment optimized to promote and accelerate protein folding. This Listeria monocytogenes serotype 4b (strain CLIP80459) protein is Chaperonin GroEL.